A 146-amino-acid polypeptide reads, in one-letter code: UPF0178 protein Helmi_09130 (146 aa).

It belongs to the UPF0178 family.

This Heliobacterium modesticaldum (strain ATCC 51547 / Ice1) protein is UPF0178 protein Helmi_09130.